A 451-amino-acid chain; its full sequence is MSKSIINLQSVENQQILSITPPNTGLSLQGTLQIPGDKSISHRALMLGAIAEGETIIAGLLLGEDPRSTAECFRAMGAQISPLNSEKVTIQGIGLGKLQEPLDVLNAGNSGTTMRLMLGLLASHPDRLFCVTGDASLRSRPMSRVIQPLQDMGANIWGRKNNTLAPLAVQGKSLKPIHYHSPIASAQVKSCILLAGLMTDGKTTVTEPALSRDHSERMLQAFGATLDIDSQTNSVTINGHPKLIGQTVIVPGDISSSAFWLVAASIVPGSELLIENVGINPTRTGILEALEMMGADITLENKRILTGEPVADLRVKSCQLKGCTIGGNIIPRLIDEVPILAVAGIFATGKTIIKDAAELRVKESDRLAVMASELTKMGAKITELPDGLEITGGTPLKAAEVDSYTDHRIAMSLAIAALNAKGKTIINRAEAAAISYPKFVETLQQVCGDSN.

3-phosphoshikimate-binding residues include Lys-38, Ser-39, and Arg-43. Lys-38 is a binding site for phosphoenolpyruvate. The phosphoenolpyruvate site is built by Gly-111 and Arg-140. Residues Ser-185, Gln-187, Asp-335, and Lys-362 each contribute to the 3-phosphoshikimate site. Gln-187 contacts phosphoenolpyruvate. The active-site Proton acceptor is Asp-335. 2 residues coordinate phosphoenolpyruvate: Arg-366 and Arg-408.

It belongs to the EPSP synthase family. As to quaternary structure, monomer.

It localises to the cytoplasm. The enzyme catalyses 3-phosphoshikimate + phosphoenolpyruvate = 5-O-(1-carboxyvinyl)-3-phosphoshikimate + phosphate. It participates in metabolic intermediate biosynthesis; chorismate biosynthesis; chorismate from D-erythrose 4-phosphate and phosphoenolpyruvate: step 6/7. Catalyzes the transfer of the enolpyruvyl moiety of phosphoenolpyruvate (PEP) to the 5-hydroxyl of shikimate-3-phosphate (S3P) to produce enolpyruvyl shikimate-3-phosphate and inorganic phosphate. The chain is 3-phosphoshikimate 1-carboxyvinyltransferase from Crocosphaera subtropica (strain ATCC 51142 / BH68) (Cyanothece sp. (strain ATCC 51142)).